The sequence spans 298 residues: Short-chain dehydrogenase/reductase prx6 (298 aa).

7 residues coordinate NADP(+): I27, D70, N97, Y174, K178, V208, and T210. Y174 acts as the Proton acceptor in catalysis. K178 serves as the catalytic Lowers pKa of active site Tyr.

Belongs to the short-chain dehydrogenases/reductases (SDR) family.

It functions in the pathway sesquiterpene biosynthesis. Functionally, short-chain dehydrogenase/reductase; part of the gene cluster that mediates the biosynthesis of PR-toxin, a bicyclic sesquiterpene belonging to the eremophilane class and acting as a mycotoxin. The first step of the pathway is catalyzed by the aristolochene synthase which performs the cyclization of trans,trans-farnesyl diphosphate (FPP) to the bicyclic sesquiterpene aristolochene. Following the formation of aristolochene, the non-oxygenated aristolochene is converted to the trioxygenated intermediate eremofortin B, via 7-epi-neopetasone. This conversion appears to involve three enzymes, a hydroxysterol oxidase-like enzyme, the quinone-oxidase prx3 that forms the quinone-type-structure in the bicyclic nucleus of aristolochene with the C8-oxo group and the C-3 hydroxyl group, and the P450 monooxygenase prx9 that introduces the epoxide at the double bond between carbons 1 and 2. No monoxy or dioxy-intermediates have been reported to be released to the broth, so these three early oxidative reactions may be coupled together. Eremofortin B is further oxidized by another P450 monooxygenase, that introduces a second epoxide between carbons 7 and 11 prior to acetylation to eremofortin A by the acetyltransferase prx11. The second epoxidation may be performed by a second P450 monooxygenase. After the acetylation step, eremofortin A is converted to eremofortin C and then to PR-toxin. First the conversion of eremofortin A to eremofortin C proceeds by oxidation of the side chain of the molecule at C-12 and is catalyzed by the short-chain oxidoreductase prx1. The cytochrome P450 monooxygenase prx8 also plays a role in this step. The primary alcohol formed at C-12 is finally oxidized by the short-chain alcohol dehydrogenase prx4 that forms PR-toxin. This chain is Short-chain dehydrogenase/reductase prx6, found in Penicillium rubens (strain ATCC 28089 / DSM 1075 / NRRL 1951 / Wisconsin 54-1255) (Penicillium chrysogenum).